We begin with the raw amino-acid sequence, 303 residues long: Putative S-adenosyl-L-methionine-dependent methyltransferase MAV_4435 (303 aa).

S-adenosyl-L-methionine is bound by residues D129 and 158 to 159 (DL).

This sequence belongs to the UPF0677 family.

Exhibits S-adenosyl-L-methionine-dependent methyltransferase activity. This is Putative S-adenosyl-L-methionine-dependent methyltransferase MAV_4435 from Mycobacterium avium (strain 104).